The sequence spans 290 residues: Agglutinin-2 (290 aa).

Residues 1-35 (MAISNTNLLQTKKPISLPLLAFITLFLMLLNRVNS) form the signal peptide. Residue Asn-155 is glycosylated (N-linked (GlcNAc...) asparagine). 2 residues coordinate Mn(2+): Glu-165 and Asp-167. Ca(2+)-binding residues include Asp-167, Asn-171, and Asp-175. Positions 175 and 180 each coordinate Mn(2+). Residue Asn-200 is glycosylated (N-linked (GlcNAc...) asparagine).

It belongs to the leguminous lectin family. In terms of assembly, homotetramer.

Its function is as follows. Mannose/glucose binding bark lectin. In terms of biological role, bark lectins are storage proteins that probably maintain stocks of nitrogen during dormant period. Self-aggregatable molecules that can bind their own carbohydrate side chains. They could also play a role in the plant's defense against phytophagous invertebrates or herbivorous higher animals. The protein is Agglutinin-2 of Cladrastis kentukea (Yellow wood).